We begin with the raw amino-acid sequence, 124 residues long: Fluoride-specific ion channel FluC (124 aa).

The next 4 helical transmembrane spans lie at Leu6–Val26, Leu37–Ala57, Thr69–Val89, and Gly92–Val112. Na(+)-binding residues include Gly73 and Thr76.

The protein belongs to the fluoride channel Fluc/FEX (TC 1.A.43) family.

The protein resides in the cell membrane. It catalyses the reaction fluoride(in) = fluoride(out). With respect to regulation, na(+) is not transported, but it plays an essential structural role and its presence is essential for fluoride channel function. In terms of biological role, fluoride-specific ion channel. Important for reducing fluoride concentration in the cell, thus reducing its toxicity. This is Fluoride-specific ion channel FluC from Methanocaldococcus jannaschii (strain ATCC 43067 / DSM 2661 / JAL-1 / JCM 10045 / NBRC 100440) (Methanococcus jannaschii).